Reading from the N-terminus, the 567-residue chain is Thiol:disulfide interchange protein DsbD (567 aa).

An N-terminal signal peptide occupies residues 1–19; sequence MAQRIFTLILLLCSTSAFA. 2 cysteine pairs are disulfide-bonded: Cys-122–Cys-128 and Cys-185–Cys-307. The next 8 helical transmembrane spans lie at 166–186, 211–231, 246–266, 299–319, 326–346, 360–380, 387–407, and 418–438; these read LPFS…TPCV, LLAF…GLVV, YVLI…FGLF, IAGL…LLYI, WLGG…LMLV, WMAH…VFLL, AWGL…AFIT, and IVQI…QDWA. Residues 435–567 enclose the Thioredoxin domain; sequence QDWAFGSPSA…FSAHLHDRQP (133 aa). A disulfide bond links Cys-482 and Cys-485.

It belongs to the thioredoxin family. DsbD subfamily.

It localises to the cell inner membrane. It carries out the reaction [protein]-dithiol + NAD(+) = [protein]-disulfide + NADH + H(+). The catalysed reaction is [protein]-dithiol + NADP(+) = [protein]-disulfide + NADPH + H(+). In terms of biological role, required to facilitate the formation of correct disulfide bonds in some periplasmic proteins and for the assembly of the periplasmic c-type cytochromes. Acts by transferring electrons from cytoplasmic thioredoxin to the periplasm. This transfer involves a cascade of disulfide bond formation and reduction steps. The polypeptide is Thiol:disulfide interchange protein DsbD (Salmonella paratyphi A (strain ATCC 9150 / SARB42)).